The following is a 348-amino-acid chain: Holliday junction branch migration complex subunit RuvB (348 aa).

Residues 1–10 are compositionally biased toward low complexity; sequence MAIVSSSSGR. A disordered region spans residues 1–37; that stretch reads MAIVSSSSGRKPPRRPEALMDPQQAPEEVVSRPEDKL. A large ATPase domain (RuvB-L) region spans residues 13–198; that stretch reads PRRPEALMDP…FGLIQRLEFY (186 aa). ATP is bound by residues Leu-37, Arg-38, Gly-79, Lys-82, Thr-83, Thr-84, Arg-188, Tyr-198, and Arg-235. Residue Thr-83 coordinates Mg(2+). The interval 199–271 is small ATPAse domain (RuvB-S); the sequence is GQGDLEAIVE…LVGEALSLHR (73 aa). Positions 274–348 are head domain (RuvB-H); it reads HRGLDASDRR…AARSHLAEAA (75 aa). DNA-binding residues include Arg-329 and Arg-334.

It belongs to the RuvB family. Homohexamer. Forms an RuvA(8)-RuvB(12)-Holliday junction (HJ) complex. HJ DNA is sandwiched between 2 RuvA tetramers; dsDNA enters through RuvA and exits via RuvB. An RuvB hexamer assembles on each DNA strand where it exits the tetramer. Each RuvB hexamer is contacted by two RuvA subunits (via domain III) on 2 adjacent RuvB subunits; this complex drives branch migration. In the full resolvosome a probable DNA-RuvA(4)-RuvB(12)-RuvC(2) complex forms which resolves the HJ.

It is found in the cytoplasm. The enzyme catalyses ATP + H2O = ADP + phosphate + H(+). Its function is as follows. The RuvA-RuvB-RuvC complex processes Holliday junction (HJ) DNA during genetic recombination and DNA repair, while the RuvA-RuvB complex plays an important role in the rescue of blocked DNA replication forks via replication fork reversal (RFR). RuvA specifically binds to HJ cruciform DNA, conferring on it an open structure. The RuvB hexamer acts as an ATP-dependent pump, pulling dsDNA into and through the RuvAB complex. RuvB forms 2 homohexamers on either side of HJ DNA bound by 1 or 2 RuvA tetramers; 4 subunits per hexamer contact DNA at a time. Coordinated motions by a converter formed by DNA-disengaged RuvB subunits stimulates ATP hydrolysis and nucleotide exchange. Immobilization of the converter enables RuvB to convert the ATP-contained energy into a lever motion, pulling 2 nucleotides of DNA out of the RuvA tetramer per ATP hydrolyzed, thus driving DNA branch migration. The RuvB motors rotate together with the DNA substrate, which together with the progressing nucleotide cycle form the mechanistic basis for DNA recombination by continuous HJ branch migration. Branch migration allows RuvC to scan DNA until it finds its consensus sequence, where it cleaves and resolves cruciform DNA. This chain is Holliday junction branch migration complex subunit RuvB, found in Synechococcus sp. (strain CC9605).